The chain runs to 230 residues: Lecithin retinol acyltransferase (230 aa).

The Cytoplasmic segment spans residues 1–194; the sequence is MKNPMLEVVS…VKIIIRDQRS (194 aa). The LRAT domain maps to 50 to 177; sequence VLEVPRTHLT…CRYGTPISPQ (128 aa). Active-site residues include H60 and H72. C161 serves as the catalytic Acyl-thioester intermediate. A helical membrane pass occupies residues 195 to 215; that stretch reads VLASAVLGLASIVCTGLVSYT. Residues 216-230 lie on the Lumenal side of the membrane; that stretch reads TLPAIFIPFFLWMAG.

This sequence belongs to the H-rev107 family. In terms of tissue distribution, hepatic stellate cells and endothelial cells (at protein level). Found at high levels in testis and liver, followed by retinal pigment epithelium, small intestine, prostate, pancreas and colon. Low expression observed in brain. In fetal tissues, expressed in retinal pigment epithelium and liver, and barely in the brain.

It is found in the endoplasmic reticulum membrane. The protein resides in the rough endoplasmic reticulum. Its subcellular location is the endosome. It localises to the multivesicular body. The protein localises to the cytoplasm. It is found in the perinuclear region. The enzyme catalyses all-trans-retinol--[retinol-binding protein] + a 1,2-diacyl-sn-glycero-3-phosphocholine = apo--[retinol-binding protein] + an all-trans-retinyl ester + a 2-acyl-sn-glycero-3-phosphocholine. It catalyses the reaction 1,2-dihexadecanoyl-sn-glycero-3-phosphocholine + all-trans-retinol = all-trans-retinyl hexadecanoate + 2-hexadecanoyl-sn-glycero-3-phosphocholine. It carries out the reaction 1,2-diheptanoyl-sn-glycero-3-phosphocholine + all-trans-retinol--[retinol-binding protein] = all-trans-retinyl heptanoate + 2-heptanoyl-sn-glycero-3-phosphocholine + apo--[retinol-binding protein]. The catalysed reaction is 1,2-dioctanoyl-sn-glycero-3-phosphocholine + all-trans-retinol--[retinol-binding protein] = 2-octanoyl-sn-glycero-3-phosphocholine + all-trans-retinyl octanoate + apo--[retinol-binding protein]. The enzyme catalyses all-trans-retinol--[retinol-binding protein] + 1,2-dihexadecanoyl-sn-glycero-3-phosphocholine = apo--[retinol-binding protein] + all-trans-retinyl hexadecanoate + 2-hexadecanoyl-sn-glycero-3-phosphocholine. It catalyses the reaction 1,2-didodecanoyl-sn-glycero-3-phosphocholine + all-trans-retinol--[retinol-binding protein] = 2-dodecanoyl-sn-glycero-3-phosphocholine + all-trans-retinyl dodecanoate + apo--[retinol-binding protein]. It functions in the pathway cofactor metabolism; retinol metabolism. Its activity is regulated as follows. Inhibited by all-trans-retinyl alpha-bromoacetate and N-boc-L-biocytinyl-11-aminoundecane chloro-methyl ketone (BACMK). Its function is as follows. Transfers the acyl group from the sn-1 position of phosphatidylcholine to all-trans retinol, producing all-trans retinyl esters. Retinyl esters are storage forms of vitamin A. LRAT plays a critical role in vision. It provides the all-trans retinyl ester substrates for the isomerohydrolase which processes the esters into 11-cis-retinol in the retinal pigment epithelium; due to a membrane-associated alcohol dehydrogenase, 11 cis-retinol is oxidized and converted into 11-cis-retinaldehyde which is the chromophore for rhodopsin and the cone photopigments. Required for the survival of cone photoreceptors and correct rod photoreceptor cell morphology. The polypeptide is Lecithin retinol acyltransferase (Homo sapiens (Human)).